We begin with the raw amino-acid sequence, 539 residues long: CTP synthase (539 aa).

The segment at 1 to 267 (MTKYIFVTGG…DQKVCDFLHI (267 aa)) is amidoligase domain. S13 contributes to the CTP binding site. S13 lines the UTP pocket. 14–19 (SLGKGI) contributes to the ATP binding site. An L-glutamine-binding site is contributed by Y54. D71 contacts ATP. D71 and E141 together coordinate Mg(2+). Residues 148-150 (DME), 188-193 (KTKPTQ), and K224 each bind CTP. Residues 188 to 193 (KTKPTQ) and K224 each bind UTP. The region spanning 294 to 537 (KITLVGKYVE…IGAASGLPEQ (244 aa)) is the Glutamine amidotransferase type-1 domain. G356 contributes to the L-glutamine binding site. C383 functions as the Nucleophile; for glutamine hydrolysis in the catalytic mechanism. Residues 384–387 (LGMQ), E407, and R465 contribute to the L-glutamine site. Catalysis depends on residues H510 and E512.

This sequence belongs to the CTP synthase family. In terms of assembly, homotetramer.

It catalyses the reaction UTP + L-glutamine + ATP + H2O = CTP + L-glutamate + ADP + phosphate + 2 H(+). The catalysed reaction is L-glutamine + H2O = L-glutamate + NH4(+). It carries out the reaction UTP + NH4(+) + ATP = CTP + ADP + phosphate + 2 H(+). It functions in the pathway pyrimidine metabolism; CTP biosynthesis via de novo pathway; CTP from UDP: step 2/2. Allosterically activated by GTP, when glutamine is the substrate; GTP has no effect on the reaction when ammonia is the substrate. The allosteric effector GTP functions by stabilizing the protein conformation that binds the tetrahedral intermediate(s) formed during glutamine hydrolysis. Inhibited by the product CTP, via allosteric rather than competitive inhibition. Its function is as follows. Catalyzes the ATP-dependent amination of UTP to CTP with either L-glutamine or ammonia as the source of nitrogen. Regulates intracellular CTP levels through interactions with the four ribonucleotide triphosphates. This Lactobacillus helveticus (strain DPC 4571) protein is CTP synthase.